Reading from the N-terminus, the 355-residue chain is Polyferredoxin protein FwdF (355 aa).

4Fe-4S ferredoxin-type domains follow at residues 24 to 53 (RELCWNDELCVGCGICADICPVNAIAMGPL), 64 to 93 (PKLDIDKDVCVLCGMCASACPFDALDLKIN), 108 to 137 (RDIKVYQDKCVLCEQCEMVCPQGAIVVERE), 147 to 176 (GEININKEKCVLCGICAEYCPADAINLKYN), 187 to 216 (TDIEVDKDKCVFCKVCEFVCPHDAIEVICY), 235 to 264 (GKTVIDKDACVTCGWCAFICPAEAIEVEKP), 267 to 296 (GELIIDVNACNACGACISICPCSALEFPKP), and 304 to 333 (PRIIVNQNLCVLCGACAKACPVNAIKVKRT). 32 residues coordinate [4Fe-4S] cluster: cysteine 33, cysteine 36, cysteine 39, cysteine 43, cysteine 73, cysteine 76, cysteine 79, cysteine 83, cysteine 117, cysteine 120, cysteine 123, cysteine 127, cysteine 156, cysteine 159, cysteine 162, cysteine 166, cysteine 196, cysteine 199, cysteine 202, cysteine 206, cysteine 244, cysteine 247, cysteine 250, cysteine 254, cysteine 276, cysteine 279, cysteine 282, cysteine 286, cysteine 313, cysteine 316, cysteine 319, and cysteine 323.

[4Fe-4S] cluster is required as a cofactor.

This Methanocaldococcus jannaschii (strain ATCC 43067 / DSM 2661 / JAL-1 / JCM 10045 / NBRC 100440) (Methanococcus jannaschii) protein is Polyferredoxin protein FwdF (fwdF).